The following is a 185-amino-acid chain: Ribosome-recycling factor (185 aa).

It belongs to the RRF family.

The protein resides in the cytoplasm. Responsible for the release of ribosomes from messenger RNA at the termination of protein biosynthesis. May increase the efficiency of translation by recycling ribosomes from one round of translation to another. The sequence is that of Ribosome-recycling factor from Listeria monocytogenes serovar 1/2a (strain ATCC BAA-679 / EGD-e).